A 225-amino-acid chain; its full sequence is UPF0758 protein Sama_0327 (225 aa).

One can recognise an MPN domain in the interval 102–224 (VLTSPDLTRD…IVSFAERGWI (123 aa)). Zn(2+) is bound by residues H173, H175, and D186. Residues 173–186 (HNHPSGVAEPSQAD) carry the JAMM motif motif.

Belongs to the UPF0758 family.

The protein is UPF0758 protein Sama_0327 of Shewanella amazonensis (strain ATCC BAA-1098 / SB2B).